An 892-amino-acid chain; its full sequence is Alanine--tRNA ligase (892 aa).

Residues H596, H600, C700, and H704 each coordinate Zn(2+).

The protein belongs to the class-II aminoacyl-tRNA synthetase family. The cofactor is Zn(2+).

The protein resides in the cytoplasm. It carries out the reaction tRNA(Ala) + L-alanine + ATP = L-alanyl-tRNA(Ala) + AMP + diphosphate. In terms of biological role, catalyzes the attachment of alanine to tRNA(Ala) in a two-step reaction: alanine is first activated by ATP to form Ala-AMP and then transferred to the acceptor end of tRNA(Ala). Also edits incorrectly charged Ser-tRNA(Ala) and Gly-tRNA(Ala) via its editing domain. In Methanococcus maripaludis (strain C5 / ATCC BAA-1333), this protein is Alanine--tRNA ligase.